The sequence spans 382 residues: Succinyl-diaminopimelate desuccinylase (382 aa).

Histidine 70 lines the Zn(2+) pocket. Residue aspartate 72 is part of the active site. Aspartate 103 contributes to the Zn(2+) binding site. Glutamate 137 functions as the Proton acceptor in the catalytic mechanism. Zn(2+)-binding residues include glutamate 138, glutamate 166, and histidine 355.

Belongs to the peptidase M20A family. DapE subfamily. In terms of assembly, homodimer. Zn(2+) serves as cofactor. The cofactor is Co(2+).

It catalyses the reaction N-succinyl-(2S,6S)-2,6-diaminopimelate + H2O = (2S,6S)-2,6-diaminopimelate + succinate. It functions in the pathway amino-acid biosynthesis; L-lysine biosynthesis via DAP pathway; LL-2,6-diaminopimelate from (S)-tetrahydrodipicolinate (succinylase route): step 3/3. In terms of biological role, catalyzes the hydrolysis of N-succinyl-L,L-diaminopimelic acid (SDAP), forming succinate and LL-2,6-diaminopimelate (DAP), an intermediate involved in the bacterial biosynthesis of lysine and meso-diaminopimelic acid, an essential component of bacterial cell walls. The protein is Succinyl-diaminopimelate desuccinylase of Paracoccus denitrificans (strain Pd 1222).